The chain runs to 415 residues: Corticotropin-releasing factor receptor 1 (415 aa).

An N-terminal signal peptide occupies residues 1-23 (MARHPQLRLVKALLLLGLNPVSA). Over 24-111 (SLQDQHCESL…CQEILNEEKK (88 aa)) the chain is Extracellular. 3 disulfides stabilise this stretch: cysteine 30–cysteine 54, cysteine 44–cysteine 87, and cysteine 68–cysteine 102. Asparagine 38, asparagine 78, and asparagine 98 each carry an N-linked (GlcNAc...) asparagine glycan. The interval 99–108 (YSECQEILNE) is important for peptide agonist binding. A helical membrane pass occupies residues 112-142 (SKVHYHVAVIINYLGHCISLVALLVAFVLFL). Residues 143 to 149 (RLRSIRC) lie on the Cytoplasmic side of the membrane. The helical transmembrane segment at 150-174 (LRNIIHWNLISAFILRNATWFVVQL) threads the bilayer. The Extracellular segment spans residues 175 to 189 (TMSPEVHQSNVGWCR). A disulfide bridge connects residues cysteine 188 and cysteine 258. Residues 190–218 (LVTAAYNYFHVTNFFWMFGEGCYLHTAIV) form a helical membrane-spanning segment. Topologically, residues 219–225 (LTYSTDR) are cytoplasmic. A helical transmembrane segment spans residues 226 to 253 (LRKWMFICIGWGVPFPIIVAWAIGKLYY). The Extracellular portion of the chain corresponds to 254–269 (DNEKCWFGKRPGVYTD). The chain crosses the membrane as a helical span at residues 270 to 295 (YIYQGPMILVLLINFIFLFNIVRILM). The segment at 280–290 (LLINFIFLFNI) is important for antagonist binding. At 296–306 (TKLRASTTSET) the chain is on the cytoplasmic side. Serine 301 is modified (phosphoserine; by PKA). The helical transmembrane segment at 307 to 331 (IQYRKAVKATLVLLPLLGITYMLFF) threads the bilayer. The Extracellular portion of the chain corresponds to 332–338 (VNPGEDE). A helical transmembrane segment spans residues 339–368 (VSRVVFIYFNSFLESFQGFFVSVFYCFLNS). Topologically, residues 369 to 415 (EVRSAIRKRWHRWQDKHSIRARVARAMSIPTSPTRVSFHSIKQSTAV) are cytoplasmic.

Belongs to the G-protein coupled receptor 2 family. Heterodimer; heterodimerizes with GPER1. Interacts (via N-terminal extracellular domain) with CRH and UCN. Interacts with DLG1; this inhibits endocytosis of CRHR1 after agonist binding. Post-translationally, C-terminal Ser or Thr residues may be phosphorylated. Phosphorylation at Ser-301 by PKA prevents maximal coupling to Gq-protein, and thereby negatively regulates downstream signaling. Expressed abundantly in the pituitary, cerebral cortex, hippocampus, amygdala and cerebellum.

Its subcellular location is the cell membrane. It is found in the endosome. Its function is as follows. G-protein coupled receptor for CRH (corticotropin-releasing factor) and UCN (urocortin). Has high affinity for CRH and UCN. Ligand binding causes a conformation change that triggers signaling via guanine nucleotide-binding proteins (G proteins) and down-stream effectors, such as adenylate cyclase. Promotes the activation of adenylate cyclase, leading to increased intracellular cAMP levels. Inhibits the activity of the calcium channel CACNA1H. Required for normal embryonic development of the adrenal gland and for normal hormonal responses to stress. Plays a role in the response to anxiogenic stimuli. The polypeptide is Corticotropin-releasing factor receptor 1 (CRHR1) (Macaca mulatta (Rhesus macaque)).